A 391-amino-acid polypeptide reads, in one-letter code: 3-ketoacyl-CoA thiolase (391 aa).

The active-site Acyl-thioester intermediate is the Cys95. Active-site proton acceptor residues include His347 and Cys377.

It belongs to the thiolase-like superfamily. Thiolase family. Heterotetramer of two alpha chains (FadB) and two beta chains (FadA).

The protein localises to the cytoplasm. It carries out the reaction an acyl-CoA + acetyl-CoA = a 3-oxoacyl-CoA + CoA. The protein operates within lipid metabolism; fatty acid beta-oxidation. Its function is as follows. Catalyzes the final step of fatty acid oxidation in which acetyl-CoA is released and the CoA ester of a fatty acid two carbons shorter is formed. The sequence is that of 3-ketoacyl-CoA thiolase from Pseudomonas aeruginosa (strain UCBPP-PA14).